Here is a 402-residue protein sequence, read N- to C-terminus: Shaggy-related protein kinase GSK2 (402 aa).

Positions 1–38 (MDQPAPAPEPMLLDAQPPAAVACDKKQQEGEAPYAEGN) are disordered. One can recognise a Protein kinase domain in the interval 63-347 (YMAERVVGTG…ALDACAHPFF (285 aa)). ATP contacts are provided by residues 69-77 (VGTGSFGIV) and K92. Residue D188 is the Proton acceptor of the active site.

This sequence belongs to the protein kinase superfamily. CMGC Ser/Thr protein kinase family. GSK-3 subfamily. Interacts with DLT. Interacts with OFP8. Interacts with GRF4. Interacts with PUB24. Interacts with SMOS1. In terms of processing, autophosphorylated. Expressed in lamina joints, vascular tissue and nodes.

The protein resides in the cytoplasm. It localises to the nucleus. It catalyses the reaction L-seryl-[protein] + ATP = O-phospho-L-seryl-[protein] + ADP + H(+). It carries out the reaction L-threonyl-[protein] + ATP = O-phospho-L-threonyl-[protein] + ADP + H(+). Its function is as follows. Serine-threonine kinase that acts as a negative regulator of brassinosteroid (BR) signaling. Phosphorylates DLT and BZR1, two positive regulators that mediates several BR responses. Phosphorylation of DLT and BZR1 inhibits their activities in BR signaling. Phosphorylates OFP8, a positive regulator of BR responses. Phosphorylated OFP8 shuttles from the nucleus to the cytoplasm where it is degraded by the proteasome. Phosphorylates the E3 ubiquitin-protein ligase PUB24, a negative regulator of BR signaling, which targets BZR1 and promotes its degradation via the 26S proteasome. Phosphorylation of PUB24 increases its stability. Phosphorylates the AP2-ERF transcription factor SMOS1, a positive regulator of BR signaling, which cooperatively functions in a transactivating complex with BZR1 to enhance the transcription of BR biosynthetic genes. Phosphorylation of SMOS1 leads to its degradation by an unknown mechanism. The protein is Shaggy-related protein kinase GSK2 of Oryza sativa subsp. japonica (Rice).